Here is a 742-residue protein sequence, read N- to C-terminus: MSGIQFDVSRLCAATISIQGRHFVDSHGRVLHLRGANVSAASKVPATPAPKIHDHAQASYVGRPFRLEEADEHWARLKSWGLTFVRITVTWEALEHKERGVYDEDYLAYLRALLQSMEPYGLVAYIALHQDVWSRYCGGSGAPGWTLEAAGFDLSNEGENLSLSGAAFLDGIKSGRLAGERGLWPTGYQKLAAATMNTLFWGGETFAPLLKVPGQIDGKWVSRNIQVYLQEAFLAATAKLVKAVGDLETVMGFELMNEPHPGFIGIQSIHEWDYTTDLHLGQFPSPLQSFSMGAGHPTPNVPVYTRSFPFPTRVTSHVTANPEGACAWASKECPWEKHGVWRWSEAKQEAAALQQDYFVKNRDGGKVDFYEDFYFPFVRKWEQVIGENISSTKGLKARMVEAIPNELCPEWKEESRPKNMVYAPHWYDLNTLFKKKFGFMSVNVQGLARGMFILRALYFGTAAAKANYALQIKTIVLAARLKLGPVPVIFGECGVPMDINNEEAFRTGDWKWQERSMDALISAMEGALMGFNLWTYNPANRDDIGDDWNAENFSWYSESNRTKLLKNAEKSSDGLDVGARLLNVIVRPYPIATAGNPTSLAYDANACAFTYRFRSPLRVSAAAPTPEEYTEIFLPRRVFRKESTEWTVTAGGKVHVDWERERVFVWFEDSSLTAASIKDDTRPRRIDIWVIGRKVEENWSIAQILVAVVILLLGVLVAYYAQLYEWEKDKMIFQHLREANGM.

2 N-linked (GlcNAc...) asparagine glycosylation sites follow: N37 and N160. E258 acts as the Proton donor in catalysis. N388 carries N-linked (GlcNAc...) asparagine glycosylation. The active-site Nucleophile is the E492. 3 N-linked (GlcNAc...) asparagine glycosylation sites follow: N552, N560, and N698. The helical transmembrane segment at I701 to A721 threads the bilayer.

It belongs to the glycosyl hydrolase 5 (cellulase A) family.

Its subcellular location is the membrane. The enzyme catalyses a beta-D-glucosyl-(1&lt;-&gt;1')-N-acylsphing-4-enine + H2O = an N-acylsphing-4-enine + D-glucose. Its function is as follows. Specifically hydrolyzes the glucosidic linkage in glucosylceramide. May prevent accumulation of aberrent glucosylceramide containing immature ceramide. In Cryptococcus neoformans var. grubii serotype A (strain H99 / ATCC 208821 / CBS 10515 / FGSC 9487) (Filobasidiella neoformans var. grubii), this protein is Glucosylceramidase.